A 442-amino-acid polypeptide reads, in one-letter code: Protein PRRC1-A (442 aa).

Residues 1 to 27 (MMEESGIETTPPSTPPPSTIGTSVPAA) form a disordered region.

It belongs to the PRRC1 family.

The protein resides in the golgi apparatus. The protein is Protein PRRC1-A (prrc1-a) of Xenopus laevis (African clawed frog).